The chain runs to 83 residues: BmKBT-like peptide (83 aa).

Positions 1-19 (MKAALLLVISTLMLIGVLT) are cleaved as a signal peptide. The LCN-type CS-alpha/beta domain occupies 21–81 (KSGYPIQHDG…TWSRETNKCR (61 aa)). Cystine bridges form between Cys31-Cys80, Cys35-Cys54, Cys41-Cys61, and Cys45-Cys63. Position 83 (Lys83) is a propeptide, removed by a carboxypeptidase.

This sequence belongs to the long (4 C-C) scorpion toxin superfamily. Sodium channel inhibitor family. Beta subfamily. As to expression, expressed by the venom gland.

Its subcellular location is the secreted. In terms of biological role, sodium channel inhibitor. Possesses potent toxicity in mice but induces only paralysis in cotton bollworm. The protein is BmKBT-like peptide of Olivierus martensii (Manchurian scorpion).